Consider the following 293-residue polypeptide: Polyamine aminopropyltransferase (293 aa).

In terms of domain architecture, PABS spans 10-244; sequence HIWFTEYHNN…GFWSFTLASK (235 aa). Gln39 contributes to the S-methyl-5'-thioadenosine binding site. The spermidine site is built by His70 and Asp94. S-methyl-5'-thioadenosine is bound by residues Glu114 and 145–146; that span reads DG. Asp163 serves as the catalytic Proton acceptor. 163-166 serves as a coordination point for spermidine; the sequence is DCPD. Pro170 contacts S-methyl-5'-thioadenosine.

It belongs to the spermidine/spermine synthase family. As to quaternary structure, homodimer or homotetramer.

The protein resides in the cytoplasm. It carries out the reaction S-adenosyl 3-(methylsulfanyl)propylamine + putrescine = S-methyl-5'-thioadenosine + spermidine + H(+). Its pathway is amine and polyamine biosynthesis; spermidine biosynthesis; spermidine from putrescine: step 1/1. Catalyzes the irreversible transfer of a propylamine group from the amino donor S-adenosylmethioninamine (decarboxy-AdoMet) to putrescine (1,4-diaminobutane) to yield spermidine. The protein is Polyamine aminopropyltransferase of Methanocaldococcus jannaschii (strain ATCC 43067 / DSM 2661 / JAL-1 / JCM 10045 / NBRC 100440) (Methanococcus jannaschii).